The sequence spans 250 residues: Doublesex- and mab-3-related transcription factor dmd-3 (250 aa).

Positions 19–68 (CQRCLNHGLREKRKNHKLSCTFRFCQCSNCIMVERRRQLNSRLMQIDGSR) form a DNA-binding region, DM 1. Over residues 90-100 (CTSQSETTNES) the composition is skewed to polar residues. A disordered region spans residues 90 to 115 (CTSQSETTNESSGEDKDDGKPKERRP). Residues 102–115 (GEDKDDGKPKERRP) show a composition bias toward basic and acidic residues. Residues 117–164 (CQRCAQHSVVNRLKGHKRACPFRDCFCAKCQVVVERQKLMADQIKLRR) constitute a DNA-binding region (DM 2). The disordered stretch occupies residues 166–201 (QKREKNNLNSEREAPIAHSMTPSPIDTVTTTTTPTS). Residues 169–180 (EKNNLNSEREAP) are compositionally biased toward basic and acidic residues. Residues 186 to 201 (TPSPIDTVTTTTTPTS) show a composition bias toward low complexity.

Belongs to the DMRT family. In terms of tissue distribution, in males, expressed in the tail tip. Specifically, expressed in 15 male-specific muscles of the tail tip called the diagonal muscles, and also in core body muscles of both males and hermaphrodites. In males, expressed in ray A-neurons. In males, expressed in PHC sensory neurons. In males, it is also expressed in the hindgut, B lineage and somatic gonad. In hermaphrodites, expressed in the anchor cell only.

Its subcellular location is the nucleus. The protein resides in the perikaryon. Its function is as follows. Transcriptional activator which promotes male-specific development. Acts partially redundantly with the transcription factor mab-3 to coordinate tail tip cell fusion and retraction and thereby regulate male tail tip morphogenesis. This is most likely through the regulation of downstream effectors such as eff-1. May also negatively regulate the expression of other proteins implicated in male tail morphogenesis including nhr-25, vav-1 and arl-1 in tail tip cells. In males, plays a role in the development of ray A-neurons by negatively regulating the activity of the transcription factor ast-1. Plays a role in the male-specific differentiation of PHC sensory neurons into densely connected hub sensory neurons. Plays a role in male mating behavior. The sequence is that of Doublesex- and mab-3-related transcription factor dmd-3 from Caenorhabditis elegans.